The primary structure comprises 468 residues: UDP-N-acetylmuramate--L-alanine ligase (468 aa).

ATP is bound at residue glycine 107 to threonine 113.

Belongs to the MurCDEF family.

It is found in the cytoplasm. The catalysed reaction is UDP-N-acetyl-alpha-D-muramate + L-alanine + ATP = UDP-N-acetyl-alpha-D-muramoyl-L-alanine + ADP + phosphate + H(+). Its pathway is cell wall biogenesis; peptidoglycan biosynthesis. In terms of biological role, cell wall formation. The polypeptide is UDP-N-acetylmuramate--L-alanine ligase (Roseiflexus sp. (strain RS-1)).